The chain runs to 89 residues: Small ribosomal subunit protein uS17 (89 aa).

Belongs to the universal ribosomal protein uS17 family. As to quaternary structure, part of the 30S ribosomal subunit.

In terms of biological role, one of the primary rRNA binding proteins, it binds specifically to the 5'-end of 16S ribosomal RNA. The protein is Small ribosomal subunit protein uS17 of Bacteroides fragilis (strain ATCC 25285 / DSM 2151 / CCUG 4856 / JCM 11019 / LMG 10263 / NCTC 9343 / Onslow / VPI 2553 / EN-2).